A 227-amino-acid chain; its full sequence is dTTP/UTP pyrophosphatase (227 aa).

Residues 1-21 form a disordered region; that stretch reads MNDLPRAELPGSGSPNPESLI. Asp87 functions as the Proton acceptor in the catalytic mechanism.

It belongs to the Maf family. YhdE subfamily. A divalent metal cation is required as a cofactor.

It is found in the cytoplasm. It carries out the reaction dTTP + H2O = dTMP + diphosphate + H(+). It catalyses the reaction UTP + H2O = UMP + diphosphate + H(+). Nucleoside triphosphate pyrophosphatase that hydrolyzes dTTP and UTP. May have a dual role in cell division arrest and in preventing the incorporation of modified nucleotides into cellular nucleic acids. The polypeptide is dTTP/UTP pyrophosphatase (Rhodopirellula baltica (strain DSM 10527 / NCIMB 13988 / SH1)).